The sequence spans 206 residues: Two-component response regulator ARR15 (206 aa).

The region spanning 19–146 (HVLAVDDSFV…DVKRLKELIM (128 aa)) is the Response regulatory domain. Aspartate 79 carries the post-translational modification 4-aspartylphosphate. The segment at 151–206 (AEEGKTKKLSPKRILQNDIDSSPSSSSTSSSSSSHDVSSLDDDTPSSKRIKLESRG) is disordered. Over residues 168–187 (DIDSSPSSSSTSSSSSSHDV) the composition is skewed to low complexity.

It belongs to the ARR family. Type-A subfamily. Two-component system major event consists of a His-to-Asp phosphorelay between a sensor histidine kinase (HK) and a response regulator (RR). In plants, the His-to-Asp phosphorelay involves an additional intermediate named Histidine-containing phosphotransfer protein (HPt). This multistep phosphorelay consists of a His-Asp-His-Asp sequential transfer of a phosphate group between first a His and an Asp of the HK protein, followed by the transfer to a conserved His of the HPt protein and finally the transfer to an Asp in the receiver domain of the RR protein.

It localises to the nucleus. Functionally, functions as a response regulator involved in His-to-Asp phosphorelay signal transduction system. Phosphorylation of the Asp residue in the receiver domain activates the ability of the protein to promote the transcription of target genes. Type-A response regulators seem to act as negative regulators of the cytokinin signaling. In Arabidopsis thaliana (Mouse-ear cress), this protein is Two-component response regulator ARR15 (ARR15).